The following is a 610-amino-acid chain: Elongation factor 4 (610 aa).

The tr-type G domain occupies Glu-11–Ser-193. GTP contacts are provided by residues Asp-23–Thr-28 and Asn-140–Asp-143.

Belongs to the TRAFAC class translation factor GTPase superfamily. Classic translation factor GTPase family. LepA subfamily.

The protein localises to the cell membrane. It carries out the reaction GTP + H2O = GDP + phosphate + H(+). Required for accurate and efficient protein synthesis under certain stress conditions. May act as a fidelity factor of the translation reaction, by catalyzing a one-codon backward translocation of tRNAs on improperly translocated ribosomes. Back-translocation proceeds from a post-translocation (POST) complex to a pre-translocation (PRE) complex, thus giving elongation factor G a second chance to translocate the tRNAs correctly. Binds to ribosomes in a GTP-dependent manner. This Streptococcus equi subsp. zooepidemicus (strain H70) protein is Elongation factor 4.